We begin with the raw amino-acid sequence, 25 residues long: Neuromedin-U-25 (25 aa).

Asparagine 25 carries the asparagine amide modification.

It belongs to the NmU family.

The protein localises to the secreted. Functionally, stimulates uterine smooth muscle contraction and causes selective vasoconstriction. The polypeptide is Neuromedin-U-25 (NMU) (Oryctolagus cuniculus (Rabbit)).